A 304-amino-acid chain; its full sequence is D-alanine--D-alanine ligase (304 aa).

Residues 101 to 298 (KKIFIKNKIL…FIKLIEWILK (198 aa)) enclose the ATP-grasp domain. Residue 131 to 184 (EKNLKFPVVVKPINEGSSVHVYICDKTNILKNLKVLKSYNEILIEEFIPGREIQ) participates in ATP binding. Mg(2+) is bound by residues aspartate 253, glutamate 265, and asparagine 267.

Belongs to the D-alanine--D-alanine ligase family. It depends on Mg(2+) as a cofactor. Mn(2+) is required as a cofactor.

It localises to the cytoplasm. The enzyme catalyses 2 D-alanine + ATP = D-alanyl-D-alanine + ADP + phosphate + H(+). It functions in the pathway cell wall biogenesis; peptidoglycan biosynthesis. Cell wall formation. In Pelagibacter ubique (strain HTCC1062), this protein is D-alanine--D-alanine ligase.